The following is a 178-amino-acid chain: 2-C-methyl-D-erythritol 2,4-cyclodiphosphate synthase (178 aa).

A divalent metal cation is bound by residues aspartate 24, histidine 26, and histidine 61. Residue 24 to 26 (DSH) coordinates 4-CDP-2-C-methyl-D-erythritol 2-phosphate. 150 to 153 (TSGE) is a binding site for 4-CDP-2-C-methyl-D-erythritol 2-phosphate.

Belongs to the IspF family. In terms of assembly, homotrimer. A divalent metal cation serves as cofactor.

It catalyses the reaction 4-CDP-2-C-methyl-D-erythritol 2-phosphate = 2-C-methyl-D-erythritol 2,4-cyclic diphosphate + CMP. Its pathway is isoprenoid biosynthesis; isopentenyl diphosphate biosynthesis via DXP pathway; isopentenyl diphosphate from 1-deoxy-D-xylulose 5-phosphate: step 4/6. Its function is as follows. Involved in the biosynthesis of isopentenyl diphosphate (IPP) and dimethylallyl diphosphate (DMAPP), two major building blocks of isoprenoid compounds. Catalyzes the conversion of 4-diphosphocytidyl-2-C-methyl-D-erythritol 2-phosphate (CDP-ME2P) to 2-C-methyl-D-erythritol 2,4-cyclodiphosphate (ME-CPP) with a corresponding release of cytidine 5-monophosphate (CMP). This chain is 2-C-methyl-D-erythritol 2,4-cyclodiphosphate synthase, found in Chlamydia trachomatis serovar A (strain ATCC VR-571B / DSM 19440 / HAR-13).